Here is a 277-residue protein sequence, read N- to C-terminus: Putative pyruvate, phosphate dikinase regulatory protein (277 aa).

151–158 (GISRTSKT) serves as a coordination point for ADP.

The protein belongs to the pyruvate, phosphate/water dikinase regulatory protein family. PDRP subfamily.

It catalyses the reaction N(tele)-phospho-L-histidyl/L-threonyl-[pyruvate, phosphate dikinase] + ADP = N(tele)-phospho-L-histidyl/O-phospho-L-threonyl-[pyruvate, phosphate dikinase] + AMP + H(+). The catalysed reaction is N(tele)-phospho-L-histidyl/O-phospho-L-threonyl-[pyruvate, phosphate dikinase] + phosphate + H(+) = N(tele)-phospho-L-histidyl/L-threonyl-[pyruvate, phosphate dikinase] + diphosphate. In terms of biological role, bifunctional serine/threonine kinase and phosphorylase involved in the regulation of the pyruvate, phosphate dikinase (PPDK) by catalyzing its phosphorylation/dephosphorylation. This chain is Putative pyruvate, phosphate dikinase regulatory protein, found in Alkaliphilus oremlandii (strain OhILAs) (Clostridium oremlandii (strain OhILAs)).